Reading from the N-terminus, the 166-residue chain is NAD(P)H-quinone oxidoreductase subunit I, chloroplastic (166 aa).

2 consecutive 4Fe-4S ferredoxin-type domains span residues 55 to 84 and 95 to 124; these read GRIH…VDWK and LNYS…MTEE. [4Fe-4S] cluster contacts are provided by Cys-64, Cys-67, Cys-70, Cys-74, Cys-104, Cys-107, Cys-110, and Cys-114.

It belongs to the complex I 23 kDa subunit family. NDH is composed of at least 16 different subunits, 5 of which are encoded in the nucleus. Requires [4Fe-4S] cluster as cofactor.

It is found in the plastid. The protein localises to the chloroplast thylakoid membrane. The enzyme catalyses a plastoquinone + NADH + (n+1) H(+)(in) = a plastoquinol + NAD(+) + n H(+)(out). The catalysed reaction is a plastoquinone + NADPH + (n+1) H(+)(in) = a plastoquinol + NADP(+) + n H(+)(out). Its function is as follows. NDH shuttles electrons from NAD(P)H:plastoquinone, via FMN and iron-sulfur (Fe-S) centers, to quinones in the photosynthetic chain and possibly in a chloroplast respiratory chain. The immediate electron acceptor for the enzyme in this species is believed to be plastoquinone. Couples the redox reaction to proton translocation, and thus conserves the redox energy in a proton gradient. This chain is NAD(P)H-quinone oxidoreductase subunit I, chloroplastic, found in Hulsea algida (Pacific hulsea).